Here is a 185-residue protein sequence, read N- to C-terminus: Protein PBP4 (185 aa).

Composition is skewed to low complexity over residues methionine 1–serine 24 and alanine 46–glutamine 62. 2 disordered regions span residues methionine 1–glutamate 116 and glutamate 147–lysine 168. Polar residues-rich tracts occupy residues proline 73–serine 83, lysine 91–asparagine 102, and glutamate 147–lysine 166.

As to quaternary structure, interacts with IGO1, LSM12 and PBP1.

It localises to the cytoplasm. The protein localises to the nucleus. The chain is Protein PBP4 (PBP4) from Saccharomyces cerevisiae (strain ATCC 204508 / S288c) (Baker's yeast).